The sequence spans 57 residues: Protein GnsA (57 aa).

Belongs to the gns family.

This is Protein GnsA (gnsA) from Escherichia coli O6:H1 (strain CFT073 / ATCC 700928 / UPEC).